The chain runs to 332 residues: ADP-L-glycero-D-manno-heptose-6-epimerase (332 aa).

Residues 13–14 (FI), 34–35 (DN), lysine 41, lysine 56, 78–82 (EGACS), and asparagine 95 each bind NADP(+). Residue tyrosine 142 is the Proton acceptor of the active site. NADP(+) is bound at residue lysine 146. Asparagine 171 is a substrate binding site. Residues valine 172 and lysine 180 each contribute to the NADP(+) site. Residue lysine 180 is the Proton acceptor of the active site. Substrate contacts are provided by residues arginine 182, histidine 189, 203 to 206 (FEGC), arginine 216, and tyrosine 295.

It belongs to the NAD(P)-dependent epimerase/dehydratase family. HldD subfamily. As to quaternary structure, homopentamer. NADP(+) is required as a cofactor.

The catalysed reaction is ADP-D-glycero-beta-D-manno-heptose = ADP-L-glycero-beta-D-manno-heptose. Its pathway is nucleotide-sugar biosynthesis; ADP-L-glycero-beta-D-manno-heptose biosynthesis; ADP-L-glycero-beta-D-manno-heptose from D-glycero-beta-D-manno-heptose 7-phosphate: step 4/4. Its function is as follows. Catalyzes the interconversion between ADP-D-glycero-beta-D-manno-heptose and ADP-L-glycero-beta-D-manno-heptose via an epimerization at carbon 6 of the heptose. In Thiobacillus denitrificans (strain ATCC 25259 / T1), this protein is ADP-L-glycero-D-manno-heptose-6-epimerase.